A 225-amino-acid polypeptide reads, in one-letter code: Interleukin-6 (225 aa).

Residues 1 to 24 (MPSRLNVFWLCAAALAALLRCAPA) form the signal peptide. A glycan (N-linked (GlcNAc...) asparagine) is linked at asparagine 98.

It belongs to the IL-6 superfamily. As to quaternary structure, component of a hexamer of two molecules each of IL6, IL6R and IL6ST; first binds to IL6R to associate with the signaling subunit IL6ST. As to expression, expressed in white muscle, skin, spleen, anterior intestine and stomach. Not expressed in brain, gill, head kidney, posterior intestine and adipose tissue.

The protein localises to the secreted. In terms of biological role, cytokine with a wide variety of biological functions in immunity, tissue regeneration, and metabolism. Binds to IL6R, then the complex associates to the signaling subunit IL6ST/gp130 to trigger the intracellular IL6-signaling pathway. The interaction with the membrane-bound IL6R and IL6ST stimulates 'classic signaling', whereas the binding of IL6 and soluble IL6R to IL6ST stimulates 'trans-signaling'. Alternatively, 'cluster signaling' occurs when membrane-bound IL6:IL6R complexes on transmitter cells activate IL6ST receptors on neighboring receiver cells. In Sparus aurata (Gilthead sea bream), this protein is Interleukin-6 (il6).